The primary structure comprises 615 residues: Dihydroxy-acid dehydratase (615 aa).

Asp-81 lines the Mg(2+) pocket. Residue Cys-122 participates in [2Fe-2S] cluster binding. Mg(2+)-binding residues include Asp-123 and Lys-124. Lys-124 is modified (N6-carboxylysine). Cys-193 serves as a coordination point for [2Fe-2S] cluster. Glu-489 is a binding site for Mg(2+). Ser-515 acts as the Proton acceptor in catalysis.

The protein belongs to the IlvD/Edd family. Homodimer. It depends on [2Fe-2S] cluster as a cofactor. Mg(2+) is required as a cofactor.

It catalyses the reaction (2R)-2,3-dihydroxy-3-methylbutanoate = 3-methyl-2-oxobutanoate + H2O. It carries out the reaction (2R,3R)-2,3-dihydroxy-3-methylpentanoate = (S)-3-methyl-2-oxopentanoate + H2O. Its pathway is amino-acid biosynthesis; L-isoleucine biosynthesis; L-isoleucine from 2-oxobutanoate: step 3/4. The protein operates within amino-acid biosynthesis; L-valine biosynthesis; L-valine from pyruvate: step 3/4. Functionally, functions in the biosynthesis of branched-chain amino acids. Catalyzes the dehydration of (2R,3R)-2,3-dihydroxy-3-methylpentanoate (2,3-dihydroxy-3-methylvalerate) into 2-oxo-3-methylpentanoate (2-oxo-3-methylvalerate) and of (2R)-2,3-dihydroxy-3-methylbutanoate (2,3-dihydroxyisovalerate) into 2-oxo-3-methylbutanoate (2-oxoisovalerate), the penultimate precursor to L-isoleucine and L-valine, respectively. This is Dihydroxy-acid dehydratase from Pseudomonas savastanoi pv. phaseolicola (strain 1448A / Race 6) (Pseudomonas syringae pv. phaseolicola (strain 1448A / Race 6)).